Here is a 147-residue protein sequence, read N- to C-terminus: Mitochondrial import receptor subunit TOM20 homolog (147 aa).

Residues Met-1–Ala-3 are Mitochondrial intermembrane-facing. Residues Val-4 to Phe-26 form a helical membrane-spanning segment. At Asp-27 to Glu-147 the chain is on the cytoplasmic side.

The protein belongs to the Tom20 family. As to quaternary structure, forms part of the preprotein translocase complex of the outer mitochondrial membrane (TOM complex). Interacts with tom22.

The protein localises to the mitochondrion outer membrane. Its function is as follows. Central component of the receptor complex responsible for the recognition and translocation of cytosolically synthesized mitochondrial preproteins. Together with tom22 functions as the transit peptide receptor at the surface of the mitochondrion outer membrane and facilitates the movement of preproteins into the tom40 translocation pore. In Xenopus laevis (African clawed frog), this protein is Mitochondrial import receptor subunit TOM20 homolog (tomm20).